A 287-amino-acid chain; its full sequence is Elongation factor Ts (287 aa).

The tract at residues threonine 80–leucine 83 is involved in Mg(2+) ion dislocation from EF-Tu.

The protein belongs to the EF-Ts family.

Its subcellular location is the cytoplasm. In terms of biological role, associates with the EF-Tu.GDP complex and induces the exchange of GDP to GTP. It remains bound to the aminoacyl-tRNA.EF-Tu.GTP complex up to the GTP hydrolysis stage on the ribosome. In Pseudomonas syringae pv. tomato (strain ATCC BAA-871 / DC3000), this protein is Elongation factor Ts.